Reading from the N-terminus, the 348-residue chain is Calcium-gated potassium channel TvoK (348 aa).

A run of 3 helical transmembrane segments spans residues 19 to 39 (LTKVFMAFIIVVLIGSYLEFL), 52 to 72 (YFTAIWFTMETVTTVGYGDVV), and 80 to 100 (VVAMLIMVSGIGLLGTLTATI). The RCK N-terminal domain maps to 120–246 (KNHTIICNWN…VSAGATEVLS (127 aa)). The RCK C-terminal domain occupies 266–348 (DFILKSLSET…KKEVEEAIKG (83 aa)).

Heterooctamer composed of four full-length subunits and four soluble RCK domains.

The protein localises to the cell membrane. Calcium-gated potassium channel. Can also be activated by Mg(2+), Mn(2+) and Ni(2+). In Thermoplasma volcanium (strain ATCC 51530 / DSM 4299 / JCM 9571 / NBRC 15438 / GSS1), this protein is Calcium-gated potassium channel TvoK.